Reading from the N-terminus, the 295-residue chain is Putative NADH-ubiquinone oxidoreductase MJ0520 (295 aa).

The next 8 membrane-spanning stretches (helical) occupy residues 8–28 (LIGA…LLGL), 69–89 (LYIF…IIAI), 129–149 (VFSA…YLTT), 163–183 (IHGS…ILLV), 199–219 (IVSG…YIAE), 220–240 (AIAY…PLVI), 243–263 (PVLT…VNGL), and 273–293 (VMLQ…RLIV).

It belongs to the complex I subunit 1 family.

Its subcellular location is the cell membrane. The catalysed reaction is a ubiquinone + NADH + 5 H(+)(in) = a ubiquinol + NAD(+) + 4 H(+)(out). In Methanocaldococcus jannaschii (strain ATCC 43067 / DSM 2661 / JAL-1 / JCM 10045 / NBRC 100440) (Methanococcus jannaschii), this protein is Putative NADH-ubiquinone oxidoreductase MJ0520.